The following is a 1495-amino-acid chain: VPS10 homolog 2 (1495 aa).

The N-terminal stretch at 1–21 is a signal peptide; that stretch reads MALFRALYIIWVFLLIPLFNA. Topologically, residues 23-1369 are lumenal; that stretch reads EFTPKVTRTL…AFREKYPINT (1347 aa). 2 BNR repeats span residues 58–67 and 101–111; these read ISFDAGENWK and YVTDDQGKSWR. An N-linked (GlcNAc...) asparagine glycan is attached at asparagine 148. 3 BNR repeats span residues 229–238, 394–403, and 465–475; these read LSADGGETFK, VSVDNGLTWS, and FISRDSGLTWR. Asparagine 479 is a glycosylation site (N-linked (GlcNAc...) asparagine). BNR repeat units follow at residues 511-520 and 740-750; these read YYSLDQGKTW and YISHDGGQTIK. The N-linked (GlcNAc...) asparagine glycan is linked to asparagine 769. Residues 837–847 form a BNR 8 repeat; sequence YLTKDGGETFT. Asparagine 986 carries an N-linked (GlcNAc...) asparagine glycan. BNR repeat units lie at residues 1119–1129 and 1161–1170; these read FLTTDGGETWT and YSTDFGKTWK. Asparagine 1279 carries an N-linked (GlcNAc...) asparagine glycan. Residues 1370 to 1390 form a helical membrane-spanning segment; the sequence is GAYALVFVTILLVIFFAAWFV. Residues 1391-1495 are Cytoplasmic-facing; that stretch reads YDRGIRRNGG…GTAQLSCFKI (105 aa).

This sequence belongs to the VPS10-related sortilin family.

It localises to the golgi apparatus. The protein localises to the trans-Golgi network membrane. Its function is as follows. Functions as a sorting receptor in the Golgi compartment required for the intracellular sorting and delivery of soluble vacuolar proteins, like carboxypeptidase Y (CPY) and proteinase A. This Saccharomyces cerevisiae (strain Lalvin EC1118 / Prise de mousse) (Baker's yeast) protein is VPS10 homolog 2 (VTH2).